Reading from the N-terminus, the 699-residue chain is Methylcrotonoyl-CoA carboxylase subunit alpha, mitochondrial (699 aa).

Residues 30-475 (ITKILIANRG…ETGFIPIHRE (446 aa)) enclose the Biotin carboxylation domain. Lys-144, Glu-228, and His-263 together coordinate ATP. In terms of domain architecture, ATP-grasp spans 148 to 345 (KDIMIKAGVP…LVEWQLKVAE (198 aa)). Residue Arg-320 is part of the active site. One can recognise a Biotinyl-binding domain in the interval 624–699 (KGADGVLGSL…EDKKTLAVIV (76 aa)). Lys-665 is subject to N6-biotinyllysine.

In terms of assembly, probably a dodecamer composed of six biotin-containing alpha subunits and six beta subunits. Mn(2+) serves as cofactor. Requires biotin as cofactor.

It localises to the mitochondrion matrix. The catalysed reaction is 3-methylbut-2-enoyl-CoA + hydrogencarbonate + ATP = 3-methyl-(2E)-glutaconyl-CoA + ADP + phosphate + H(+). It participates in amino-acid degradation; L-leucine degradation; (S)-3-hydroxy-3-methylglutaryl-CoA from 3-isovaleryl-CoA: step 2/3. Functionally, biotin-attachment subunit of the 3-methylcrotonyl-CoA carboxylase, an enzyme that catalyzes the conversion of 3-methylcrotonyl-CoA to 3-methylglutaconyl-CoA, a critical step for leucine and isovaleric acid catabolism. The polypeptide is Methylcrotonoyl-CoA carboxylase subunit alpha, mitochondrial (mccA) (Dictyostelium discoideum (Social amoeba)).